Consider the following 1076-residue polypeptide: DNA-directed RNA polymerase subunit beta (1076 aa).

It belongs to the RNA polymerase beta chain family. As to quaternary structure, in plastids the minimal PEP RNA polymerase catalytic core is composed of four subunits: alpha, beta, beta', and beta''. When a (nuclear-encoded) sigma factor is associated with the core the holoenzyme is formed, which can initiate transcription.

The protein resides in the plastid. It localises to the chloroplast. It carries out the reaction RNA(n) + a ribonucleoside 5'-triphosphate = RNA(n+1) + diphosphate. DNA-dependent RNA polymerase catalyzes the transcription of DNA into RNA using the four ribonucleoside triphosphates as substrates. This is DNA-directed RNA polymerase subunit beta from Hordeum vulgare (Barley).